A 203-amino-acid polypeptide reads, in one-letter code: Twist-related protein 1 (203 aa).

The segment covering 1–18 (MMQDVSSSPVSPADDSLS) has biased composition (low complexity). The interval 1-106 (MMQDVSSSPV…GGGSPQSYEE (106 aa)) is disordered. A compositionally biased stretch (basic residues) spans 34–43 (RGGRKRRSSR). 2 stretches are compositionally biased toward gly residues: residues 46–65 (AGGG…GGDE) and 80–100 (GCGG…GGGS). A bHLH domain is found at 109–160 (TQRVMANVRERQRTQSLNEAFAALRKIIPTLPSDKLSKIQTLKLAARYIDFL). A sufficient for transactivation activity region spans residues 162-192 (QVLQSDELDSKMASCSYVAHERLSYAFSVWR).

Efficient DNA binding requires dimerization with another bHLH protein. Homodimer or heterodimer with E proteins such as TCF3. ID1 binds preferentially to TCF3 but does not interact efficiently with TWIST1 so ID1 levels control the amount of TCF3 available to dimerize with TWIST and thus determine the type of dimer formed.

It localises to the nucleus. Functionally, acts as a transcriptional regulator. Inhibits myogenesis by sequestrating E proteins, inhibiting trans-activation by MEF2, and inhibiting DNA-binding by MYOD1 through physical interaction. This interaction probably involves the basic domains of both proteins. Also represses expression of pro-inflammatory cytokines such as TNFA and IL1B. Regulates cranial suture patterning and fusion. Activates transcription as a heterodimer with E proteins. Regulates gene expression differentially, depending on dimer composition. Homodimers induce expression of FGFR2 and POSTN while heterodimers repress FGFR2 and POSTN expression and induce THBS1 expression. Heterodimerization is also required for osteoblast differentiation. Represses the activity of the circadian transcriptional activator: NPAS2-BMAL1 heterodimer. The polypeptide is Twist-related protein 1 (TWIST1) (Saguinus oedipus (Cotton-top tamarin)).